We begin with the raw amino-acid sequence, 396 residues long: MNFNKKTIEDIQVKGKKVLVRCDFNVPLKDGVITDENRLNGALPTIKYLVENGAKVILCSHMGKPKGEPKPELSLAPVAKRLSELLGKEIKFAPDNTVVGENAKAAVAEMKDGDVVLLENTRYRKEETKNGEEFSKELASLAEIFVNDAFGTAHRAHCSTVGVTDYIDTAVCGYLIQKELKFLGNAVETPEKPFVAILGGAKVSDKIAVINNLLDKVDTIIIGGGMAYTFLKAQGYEIGTSLVEEDRLDYAKEMIAKAEEKSVKFLLPVDHRVAAEFKDVEATVTNDQNIPTGNMGLDIGPKTETVYANAIKDAKTVIWNGPMGVFEFENFNKGTIAVAKAMADSNATTIIGGGDSAAAVNILGFGDKMTHISTGGGASLEFLEGKVLPGISALND.

Substrate contacts are provided by residues 23 to 25, Arg38, 61 to 64, Arg122, and Arg155; these read DFN and HMGK. Residues Lys206, Gly296, Glu327, and 353 to 356 each bind ATP; that span reads GGDS.

It belongs to the phosphoglycerate kinase family. Monomer.

The protein resides in the cytoplasm. It carries out the reaction (2R)-3-phosphoglycerate + ATP = (2R)-3-phospho-glyceroyl phosphate + ADP. Its pathway is carbohydrate degradation; glycolysis; pyruvate from D-glyceraldehyde 3-phosphate: step 2/5. In Clostridium botulinum (strain Eklund 17B / Type B), this protein is Phosphoglycerate kinase.